Here is a 61-residue protein sequence, read N- to C-terminus: Photosystem II reaction center protein K (61 aa).

Positions 1–24 (MLNILNLICICLNFALYSSSFFFT) are excised as a propeptide. A helical transmembrane segment spans residues 40-60 (MPVIPLFFFLLAFVWQAAVSF).

The protein belongs to the PsbK family. PSII is composed of 1 copy each of membrane proteins PsbA, PsbB, PsbC, PsbD, PsbE, PsbF, PsbH, PsbI, PsbJ, PsbK, PsbL, PsbM, PsbT, PsbX, PsbY, PsbZ, Psb30/Ycf12, at least 3 peripheral proteins of the oxygen-evolving complex and a large number of cofactors. It forms dimeric complexes.

The protein localises to the plastid. It is found in the chloroplast thylakoid membrane. In terms of biological role, one of the components of the core complex of photosystem II (PSII). PSII is a light-driven water:plastoquinone oxidoreductase that uses light energy to abstract electrons from H(2)O, generating O(2) and a proton gradient subsequently used for ATP formation. It consists of a core antenna complex that captures photons, and an electron transfer chain that converts photonic excitation into a charge separation. In Populus alba (White poplar), this protein is Photosystem II reaction center protein K.